A 375-amino-acid polypeptide reads, in one-letter code: N5-carboxyaminoimidazole ribonucleotide synthase (375 aa).

ATP-binding positions include R108, K148, G153 to Q159, E183 to L186, E191, H214, and N266 to E267. The ATP-grasp domain maps to K112–T296.

Belongs to the PurK/PurT family. As to quaternary structure, homodimer.

The enzyme catalyses 5-amino-1-(5-phospho-beta-D-ribosyl)imidazole + hydrogencarbonate + ATP = 5-carboxyamino-1-(5-phospho-D-ribosyl)imidazole + ADP + phosphate + 2 H(+). It participates in purine metabolism; IMP biosynthesis via de novo pathway; 5-amino-1-(5-phospho-D-ribosyl)imidazole-4-carboxylate from 5-amino-1-(5-phospho-D-ribosyl)imidazole (N5-CAIR route): step 1/2. Catalyzes the ATP-dependent conversion of 5-aminoimidazole ribonucleotide (AIR) and HCO(3)(-) to N5-carboxyaminoimidazole ribonucleotide (N5-CAIR). The chain is N5-carboxyaminoimidazole ribonucleotide synthase from Staphylococcus epidermidis (strain ATCC 35984 / DSM 28319 / BCRC 17069 / CCUG 31568 / BM 3577 / RP62A).